The primary structure comprises 395 residues: Carbohydrate sulfotransferase 5 (395 aa).

Over 1–7 (MRLPRFS) the chain is Cytoplasmic. The helical; Signal-anchor for type II membrane protein transmembrane segment at 8–26 (STVMLSLLMVQTGILVFLV) threads the bilayer. Residues 27-395 (SRQVPSSPAG…ASSTEKQPES (369 aa)) lie on the Lumenal side of the membrane. 49 to 55 (WRSGSSF) lines the 3'-phosphoadenylyl sulfate pocket. Asn116 and Asn142 each carry an N-linked (GlcNAc...) asparagine glycan. 202 to 210 (RDPRAVLRS) provides a ligand contact to 3'-phosphoadenylyl sulfate. Residues Asn229 and Asn305 are each glycosylated (N-linked (GlcNAc...) asparagine).

It belongs to the sulfotransferase 1 family. Gal/GlcNAc/GalNAc subfamily. Expressed in cornea.

It localises to the golgi apparatus membrane. In terms of biological role, sulfotransferase that utilizes 3'-phospho-5'-adenylyl sulfate (PAPS) as sulfonate donor to catalyze the transfer of sulfate to position 6 of non-reducing N-acetylglucosamine (GlcNAc) residues of keratan. Mediates sulfation of keratan in cornea. Keratan sulfate plays a central role in maintaining corneal transparency. Acts on the non-reducing terminal GlcNAc of short and long carbohydrate substrates that have poly-N-acetyllactosamine structures. May also have activity toward O-linked sugars of mucin-type acceptors. The chain is Carbohydrate sulfotransferase 5 (Chst5) from Mus musculus (Mouse).